The chain runs to 1342 residues: DNA-directed RNA polymerase subunit beta (1342 aa).

It belongs to the RNA polymerase beta chain family. As to quaternary structure, the RNAP catalytic core consists of 2 alpha, 1 beta, 1 beta' and 1 omega subunit. When a sigma factor is associated with the core the holoenzyme is formed, which can initiate transcription.

It carries out the reaction RNA(n) + a ribonucleoside 5'-triphosphate = RNA(n+1) + diphosphate. Its function is as follows. DNA-dependent RNA polymerase catalyzes the transcription of DNA into RNA using the four ribonucleoside triphosphates as substrates. The protein is DNA-directed RNA polymerase subunit beta of Pectobacterium atrosepticum (strain SCRI 1043 / ATCC BAA-672) (Erwinia carotovora subsp. atroseptica).